The primary structure comprises 827 residues: uncharacterized protein (827 aa).

In terms of domain architecture, PAS 1 spans 12 to 82; that stretch reads FDADFEAILN…DMDIGVLSTG (71 aa). Residues 212–264 form the PAC 1 domain; that stretch reads LDVEFRLAAAEGGYSWYRSRAATRRAEDGSILRWYGTVEDIDDRRKMFEALKE. The PAS 2 domain maps to 265–335; the sequence is SEARFRAIAD…RVFYQAFDLR (71 aa). In terms of domain architecture, PAC 2 spans 338 to 390; it reads VRMEYRLKRAGGGSAWVIDIGQPRFASDGTFLGFVGIALDITERRNAEQERLL. One can recognise a GGDEF domain in the interval 428 to 561; it reads TRLAILCLDL…GGGTIVQYEP (134 aa). Residues 570–820 enclose the EAL domain; the sequence is RQRMKVSLRH…QAMALLKSRS (251 aa).

This is an uncharacterized protein from Sinorhizobium fredii (strain NBRC 101917 / NGR234).